Here is a 447-residue protein sequence, read N- to C-terminus: Folate synthesis bifunctional protein (447 aa).

Positions 1 to 165 are HPPK; sequence MTTAQFICLS…SFGEIAHLLP (165 aa). One can recognise a Pterin-binding domain in the interval 179–438; sequence TLLMGVVNVT…DVEANQRVLS (260 aa). A DHPS region spans residues 181–447; the sequence is LMGVVNVTDN…SAAAWSGVHV (267 aa). Asn-186 lines the Mg(2+) pocket. (7,8-dihydropterin-6-yl)methyl diphosphate contacts are provided by residues Thr-226, Asp-266, Asn-286, Asp-356, Lys-392, and 426–428; that span reads RVH.

This sequence in the C-terminal section; belongs to the DHPS family. In the N-terminal section; belongs to the HPPK family. It depends on Mg(2+) as a cofactor.

It catalyses the reaction 6-hydroxymethyl-7,8-dihydropterin + ATP = (7,8-dihydropterin-6-yl)methyl diphosphate + AMP + H(+). The catalysed reaction is (7,8-dihydropterin-6-yl)methyl diphosphate + 4-aminobenzoate = 7,8-dihydropteroate + diphosphate. It participates in cofactor biosynthesis; tetrahydrofolate biosynthesis; 2-amino-4-hydroxy-6-hydroxymethyl-7,8-dihydropteridine diphosphate from 7,8-dihydroneopterin triphosphate: step 4/4. The protein operates within cofactor biosynthesis; tetrahydrofolate biosynthesis; 7,8-dihydrofolate from 2-amino-4-hydroxy-6-hydroxymethyl-7,8-dihydropteridine diphosphate and 4-aminobenzoate: step 1/2. This is Folate synthesis bifunctional protein (folKP) from Chlamydia caviae (strain ATCC VR-813 / DSM 19441 / 03DC25 / GPIC) (Chlamydophila caviae).